The following is a 268-amino-acid chain: Non-homologous end joining protein Ku (268 aa).

Residues 13–175 (VSLVTCPVTM…TLHDGNAVRN (163 aa)) enclose the Ku domain. Residues 174 to 194 (RNGGHPAARTRPASEAESADS) form a disordered region.

The protein belongs to the prokaryotic Ku family. As to quaternary structure, homodimer. Interacts with LigD.

Its function is as follows. With LigD forms a non-homologous end joining (NHEJ) DNA repair enzyme, which repairs dsDNA breaks with reduced fidelity. Binds linear dsDNA with 5'- and 3'- overhangs but not closed circular dsDNA nor ssDNA. Recruits and stimulates the ligase activity of LigD. The polypeptide is Non-homologous end joining protein Ku (Gluconacetobacter diazotrophicus (strain ATCC 49037 / DSM 5601 / CCUG 37298 / CIP 103539 / LMG 7603 / PAl5)).